A 1939-amino-acid polypeptide reads, in one-letter code: Myosin heavy chain, skeletal muscle, adult (1939 aa).

The residue at position 2 (A2) is an N-acetylalanine. The Myosin N-terminal SH3-like domain maps to 34 to 83 (DAKSSVFVVHPKESFVKGTIQSKEGGKVTVKTEGGETLTVKEDQVFSMNP). An N6-methyllysine modification is found at K36. The 695-residue stretch at 87–781 (DKIEDMAMMT…LLGLLEEMRD (695 aa)) folds into the Myosin motor domain. K131 is modified (N6,N6,N6-trimethyllysine). Residue 180 to 187 (GESGAGKT) participates in ATP binding. The residue at position 552 (K552) is an N6,N6,N6-trimethyllysine. The segment at 658-680 (LNKLMANLRSTHPHFVRCIIPNE) is actin-binding. H756 is subject to Pros-methylhistidine. The actin-binding stretch occupies residues 760 to 774 (RFGHTKVFFKAGLLG). The IQ domain occupies 784-813 (LAEIITRTQARCRGFLMRVEYRRMVERRES). Residues 839-841 (IKP) form a hinge region. The stretch at 842-1939 (LLKSAESEKE…IHGKKIEEEE (1098 aa)) forms a coiled coil.

It belongs to the TRAFAC class myosin-kinesin ATPase superfamily. Myosin family. Muscle myosin is a hexameric protein that consists of 2 heavy chain subunits (MHC), 2 alkali light chain subunits (MLC) and 2 regulatory light chain subunits (MLC-2).

Its subcellular location is the cytoplasm. The protein resides in the myofibril. Muscle contraction. Myosin is a protein that binds to F-actin and has ATPase activity that is activated by F-actin. The polypeptide is Myosin heavy chain, skeletal muscle, adult (Gallus gallus (Chicken)).